Consider the following 108-residue polypeptide: MMSEPGAGLDRQCDGLTWRFRVRVTPKAKKASVGGLHDGALKVSVHTVPEDGKANKAVIASLAKWLRVSKGRVAIVAGETSRLKTIVVEFKSQDEMNTADAKLKKELS.

The protein belongs to the UPF0235 family.

This chain is UPF0235 protein RB8260, found in Rhodopirellula baltica (strain DSM 10527 / NCIMB 13988 / SH1).